A 1072-amino-acid chain; its full sequence is Carbamoyl phosphate synthase large chain (1072 aa).

A carboxyphosphate synthetic domain region spans residues Met1–Glu401. The ATP site is built by Arg129, Arg169, Gly175, Gly176, Lys208, Ile210, Glu215, Gly241, Val242, His243, Gln284, and Glu298. In terms of domain architecture, ATP-grasp 1 spans Arg133 to Val327. Mg(2+) is bound by residues Gln284, Glu298, and Asn300. Gln284, Glu298, and Asn300 together coordinate Mn(2+). The segment at Leu402–Ser546 is oligomerization domain. The segment at Ile547–Gly929 is carbamoyl phosphate synthetic domain. One can recognise an ATP-grasp 2 domain in the interval Glu671–Leu861. Positions 707, 746, 752, 777, 778, 779, 780, 820, and 832 each coordinate ATP. The Mg(2+) site is built by Gln820, Glu832, and Asn834. Gln820, Glu832, and Asn834 together coordinate Mn(2+). Residues Ile930–Ala1072 enclose the MGS-like domain. Positions Ile930–Ala1072 are allosteric domain.

It belongs to the CarB family. Composed of two chains; the small (or glutamine) chain promotes the hydrolysis of glutamine to ammonia, which is used by the large (or ammonia) chain to synthesize carbamoyl phosphate. Tetramer of heterodimers (alpha,beta)4. Requires Mg(2+) as cofactor. The cofactor is Mn(2+).

The enzyme catalyses hydrogencarbonate + L-glutamine + 2 ATP + H2O = carbamoyl phosphate + L-glutamate + 2 ADP + phosphate + 2 H(+). The catalysed reaction is hydrogencarbonate + NH4(+) + 2 ATP = carbamoyl phosphate + 2 ADP + phosphate + 2 H(+). It participates in amino-acid biosynthesis; L-arginine biosynthesis; carbamoyl phosphate from bicarbonate: step 1/1. It functions in the pathway pyrimidine metabolism; UMP biosynthesis via de novo pathway; (S)-dihydroorotate from bicarbonate: step 1/3. Its function is as follows. Large subunit of the glutamine-dependent carbamoyl phosphate synthetase (CPSase). CPSase catalyzes the formation of carbamoyl phosphate from the ammonia moiety of glutamine, carbonate, and phosphate donated by ATP, constituting the first step of 2 biosynthetic pathways, one leading to arginine and/or urea and the other to pyrimidine nucleotides. The large subunit (synthetase) binds the substrates ammonia (free or transferred from glutamine from the small subunit), hydrogencarbonate and ATP and carries out an ATP-coupled ligase reaction, activating hydrogencarbonate by forming carboxy phosphate which reacts with ammonia to form carbamoyl phosphate. In Bacillus cytotoxicus (strain DSM 22905 / CIP 110041 / 391-98 / NVH 391-98), this protein is Carbamoyl phosphate synthase large chain.